The primary structure comprises 243 residues: MILFPAVDIKDGRCVRLRQGRADAETVFSDDPAAMARHWQDQGAKWLHVIDLDGAFSGMPANFELIRRICADLSVPVQLGGGIRDEATAKAYLDAGVERLIIGTVALEEPDLYARLCATFPGRIGVSLDAEGGRLKTKGWVADSGLTVDDVLPRLLAAGTAFVIYTDIDRDGMQTGVNLSALERLAGMCPVPVIAAGGVATLEDVRALYPMTLTSSVEGAITGRAIYTGTLDLHAAMEWIAAQ.

The active-site Proton acceptor is aspartate 8. Catalysis depends on aspartate 129, which acts as the Proton donor.

Belongs to the HisA/HisF family.

The protein localises to the cytoplasm. It catalyses the reaction 1-(5-phospho-beta-D-ribosyl)-5-[(5-phospho-beta-D-ribosylamino)methylideneamino]imidazole-4-carboxamide = 5-[(5-phospho-1-deoxy-D-ribulos-1-ylimino)methylamino]-1-(5-phospho-beta-D-ribosyl)imidazole-4-carboxamide. It participates in amino-acid biosynthesis; L-histidine biosynthesis; L-histidine from 5-phospho-alpha-D-ribose 1-diphosphate: step 4/9. The chain is 1-(5-phosphoribosyl)-5-[(5-phosphoribosylamino)methylideneamino] imidazole-4-carboxamide isomerase from Nitratidesulfovibrio vulgaris (strain DSM 19637 / Miyazaki F) (Desulfovibrio vulgaris).